A 443-amino-acid chain; its full sequence is Serine/threonine-protein phosphatase 2A 55 kDa regulatory subunit B beta isoform (443 aa).

WD repeat units lie at residues 22 to 61 (TEADIISTVEFNHTGELLATGDKGGRVVIFQREQESKNQV), 87 to 128 (EIEE…KRPE), 171 to 209 (AHTYHINSISVNSDYETYMSADDLRINLWNFEITNQSFN), and 220 to 260 (ELTE…LCDR). A Phosphoserine modification is found at S275. WD repeat units follow at residues 279-317 (EIISSISDVKFSHSGRYIMTRDYLTVKVWDLNMENRPIE), 334-375 (ENDC…DVTL), and 410-442 (DFSKKILHTAWHPSENIIAVAATNNLYIFQDKV). Y295 carries the post-translational modification Phosphotyrosine. Residue T298 is modified to Phosphothreonine.

Belongs to the phosphatase 2A regulatory subunit B family. In terms of assembly, PP2A consists of a common heterodimeric core enzyme, composed of a 36 kDa catalytic subunit (subunit C) and a 65 kDa constant regulatory subunit (PR65 or subunit A), that associates with a variety of regulatory subunits. Proteins that associate with the core dimer include three families of regulatory subunits B (the R2/B/PR55/B55, R3/B''/PR72/PR130/PR59 and R5/B'/B56 families), the 48 kDa variable regulatory subunit, viral proteins, and cell signaling molecules. Interacts with TOMM22. Interacts with IER5 (via N- and C-terminal regions).

The protein resides in the cytoplasm. The protein localises to the cytoskeleton. It localises to the membrane. Functionally, the B regulatory subunit might modulate substrate selectivity and catalytic activity, and might also direct the localization of the catalytic enzyme to a particular subcellular compartment. The polypeptide is Serine/threonine-protein phosphatase 2A 55 kDa regulatory subunit B beta isoform (PPP2R2B) (Bos taurus (Bovine)).